The sequence spans 366 residues: GTP cyclohydrolase 1 type 2 homolog (366 aa).

Positions 64, 65, 102, 326, and 329 each coordinate Zn(2+).

This sequence belongs to the GTP cyclohydrolase I type 2/NIF3 family. Homohexamer.

The polypeptide is GTP cyclohydrolase 1 type 2 homolog (Staphylococcus aureus (strain COL)).